Consider the following 249-residue polypeptide: NAD-dependent protein deacylase 2 (249 aa).

The region spanning 1-240 is the Deacetylase sirtuin-type domain; it reads MNVADLLASS…PRLVEEVKRR (240 aa). 18–37 lines the NAD(+) pocket; the sequence is GAGISAESGVPTFRGPGGLW. Residues Tyr62 and Arg65 each coordinate substrate. NAD(+) is bound at residue 96-99; sequence QNVD. His114 (proton acceptor) is an active-site residue. 4 residues coordinate Zn(2+): Cys122, Cys125, Cys142, and Cys145. NAD(+)-binding positions include 182-184, 208-210, and Ala226; these read GTS and NVE.

This sequence belongs to the sirtuin family. Class III subfamily. Zn(2+) serves as cofactor.

The protein localises to the cytoplasm. The catalysed reaction is N(6)-acetyl-L-lysyl-[protein] + NAD(+) + H2O = 2''-O-acetyl-ADP-D-ribose + nicotinamide + L-lysyl-[protein]. The enzyme catalyses N(6)-succinyl-L-lysyl-[protein] + NAD(+) + H2O = 2''-O-succinyl-ADP-D-ribose + nicotinamide + L-lysyl-[protein]. In terms of biological role, NAD-dependent lysine deacetylase and desuccinylase that specifically removes acetyl and succinyl groups on target proteins. Modulates the activities of several proteins which are inactive in their acylated form. Deacetylates the N-terminal lysine residue of Alba, the major archaeal chromatin protein and that, in turn, increases Alba's DNA binding affinity, thereby repressing transcription. The chain is NAD-dependent protein deacylase 2 from Pyrobaculum aerophilum (strain ATCC 51768 / DSM 7523 / JCM 9630 / CIP 104966 / NBRC 100827 / IM2).